Consider the following 160-residue polypeptide: NADH-quinone oxidoreductase subunit B (160 aa).

Positions 39, 40, 104, and 135 each coordinate [4Fe-4S] cluster.

Belongs to the complex I 20 kDa subunit family. In terms of assembly, NDH-1 is composed of 14 different subunits. Subunits NuoB, C, D, E, F, and G constitute the peripheral sector of the complex. The cofactor is [4Fe-4S] cluster.

It localises to the cell membrane. It carries out the reaction a quinone + NADH + 5 H(+)(in) = a quinol + NAD(+) + 4 H(+)(out). Functionally, NDH-1 shuttles electrons from NADH, via FMN and iron-sulfur (Fe-S) centers, to quinones in the respiratory chain. The immediate electron acceptor for the enzyme in this species is believed to be a menaquinone. Couples the redox reaction to proton translocation (for every two electrons transferred, four hydrogen ions are translocated across the cytoplasmic membrane), and thus conserves the redox energy in a proton gradient. In Amoebophilus asiaticus (strain 5a2), this protein is NADH-quinone oxidoreductase subunit B.